The sequence spans 358 residues: Trace amine-associated receptor 7b (358 aa).

Residues 1-47 (MATDNDSFPWDQDSILSSDMFSATSTELCYENLNRSCVRSPYSPGPR) are Extracellular-facing. N-linked (GlcNAc...) asparagine glycans are attached at residues Asn5 and Asn34. Intrachain disulfides connect Cys37/Cys201 and Cys120/Cys205. A helical transmembrane segment spans residues 48–68 (LILYAVFGFGAALAVCGNLLV). Topologically, residues 69-83 (MTSILHFRQLHSPAN) are cytoplasmic. The chain crosses the membrane as a helical span at residues 84-104 (FLVVSLACADFLVGLTVMPFS). Residues 105–121 (TVRSVEGCWYFGESYCK) are Extracellular-facing. The helical transmembrane segment at 122-143 (LHTCFDVSFCYCSIFHLCFISV) threads the bilayer. The Cytoplasmic portion of the chain corresponds to 144-166 (DRYIAVSDPLTYPTRFTAFVSGK). Residues 167–187 (CITFSWLLSTIYGFSLLYTGA) form a helical membrane-spanning segment. Topologically, residues 188-212 (NEAGLEDLVSALTCVGGCQLAVNQS) are extracellular. An N-linked (GlcNAc...) asparagine glycan is attached at Asn210. Residues 213–233 (WVFINFLLFLIPTLVMITVYS) form a helical membrane-spanning segment. The Cytoplasmic portion of the chain corresponds to 234-274 (KIFLIAKQQAQNIEKMSKQTARASDSYKDRVAKRERKAAKT). A helical membrane pass occupies residues 275-295 (LGIAVAAFLLSWLPYFIDSII). At 296–309 (DAFLGFITPTYVYE) the chain is on the extracellular side. Residues 310-333 (ILVWIAYYNSAMNPLIYAFFYPWF) traverse the membrane as a helical segment. At 334–358 (RKAIKLIVSGKVLRENSSTTNLFPE) the chain is on the cytoplasmic side.

The protein belongs to the G-protein coupled receptor 1 family. As to expression, specifically expressed in neurons of the olfactory epithelium.

It is found in the cell membrane. Its function is as follows. Olfactory receptor specific for N,N-dimethylalkylamines trace amines, such as N,N-dimethylcyclohexylamine. Trace amine compounds are enriched in animal body fluids and act on trace amine-associated receptors (TAARs) to elicit both intraspecific and interspecific innate behaviors. Ligand-binding causes a conformation change that triggers signaling via G(s)-class of G alpha proteins (GNAL or GNAS). This Mus musculus (Mouse) protein is Trace amine-associated receptor 7b.